Consider the following 350-residue polypeptide: Protein-glutamate methylesterase/protein-glutamine glutaminase 6 (350 aa).

The Response regulatory domain maps to 11-126 (RVLVVDDSAA…LAPVREELLE (116 aa)). Asp-62 is subject to 4-aspartylphosphate. One can recognise a CheB-type methylesterase domain in the interval 150-347 (ELEPARVAVV…ARLVEFARDA (198 aa)). Catalysis depends on residues Ser-162, His-189, and Asp-289.

The protein belongs to the CheB family. Phosphorylated by CheA. Phosphorylation of the N-terminal regulatory domain activates the methylesterase activity.

Its subcellular location is the cytoplasm. It carries out the reaction [protein]-L-glutamate 5-O-methyl ester + H2O = L-glutamyl-[protein] + methanol + H(+). It catalyses the reaction L-glutaminyl-[protein] + H2O = L-glutamyl-[protein] + NH4(+). Its function is as follows. Involved in chemotaxis. Part of a chemotaxis signal transduction system that modulates chemotaxis in response to various stimuli. Catalyzes the demethylation of specific methylglutamate residues introduced into the chemoreceptors (methyl-accepting chemotaxis proteins or MCP) by CheR. Also mediates the irreversible deamidation of specific glutamine residues to glutamic acid. The chain is Protein-glutamate methylesterase/protein-glutamine glutaminase 6 from Anaeromyxobacter dehalogenans (strain 2CP-C).